Consider the following 251-residue polypeptide: Triosephosphate isomerase (251 aa).

9 to 11 contributes to the substrate binding site; sequence NWK. Catalysis depends on His95, which acts as the Electrophile. Catalysis depends on Glu167, which acts as the Proton acceptor. Residues Gly173, Ser212, and 233-234 each bind substrate; that span reads GG.

Belongs to the triosephosphate isomerase family. As to quaternary structure, homodimer.

The protein resides in the cytoplasm. It catalyses the reaction D-glyceraldehyde 3-phosphate = dihydroxyacetone phosphate. It functions in the pathway carbohydrate biosynthesis; gluconeogenesis. Its pathway is carbohydrate degradation; glycolysis; D-glyceraldehyde 3-phosphate from glycerone phosphate: step 1/1. Its function is as follows. Involved in the gluconeogenesis. Catalyzes stereospecifically the conversion of dihydroxyacetone phosphate (DHAP) to D-glyceraldehyde-3-phosphate (G3P). This Pseudomonas putida (strain ATCC 700007 / DSM 6899 / JCM 31910 / BCRC 17059 / LMG 24140 / F1) protein is Triosephosphate isomerase.